The sequence spans 331 residues: Ketol-acid reductoisomerase (NADP(+)) (331 aa).

Positions 2–182 constitute a KARI N-terminal Rossmann domain; it reads AKMYYDKDAD…GGTRAGVIET (181 aa). Residues 25–28, S51, S53, and 83–86 each bind NADP(+); these read FGSQ and DEKQ. Residue H108 is part of the active site. G134 is a binding site for NADP(+). The region spanning 183–328 is the KARI C-terminal knotted domain; that stretch reads TFKEETETDL…KGLREMMAWI (146 aa). 4 residues coordinate Mg(2+): D191, E195, E227, and E231. S252 contributes to the substrate binding site.

The protein belongs to the ketol-acid reductoisomerase family. It depends on Mg(2+) as a cofactor.

The enzyme catalyses (2R)-2,3-dihydroxy-3-methylbutanoate + NADP(+) = (2S)-2-acetolactate + NADPH + H(+). The catalysed reaction is (2R,3R)-2,3-dihydroxy-3-methylpentanoate + NADP(+) = (S)-2-ethyl-2-hydroxy-3-oxobutanoate + NADPH + H(+). Its pathway is amino-acid biosynthesis; L-isoleucine biosynthesis; L-isoleucine from 2-oxobutanoate: step 2/4. It participates in amino-acid biosynthesis; L-valine biosynthesis; L-valine from pyruvate: step 2/4. Functionally, involved in the biosynthesis of branched-chain amino acids (BCAA). Catalyzes an alkyl-migration followed by a ketol-acid reduction of (S)-2-acetolactate (S2AL) to yield (R)-2,3-dihydroxy-isovalerate. In the isomerase reaction, S2AL is rearranged via a Mg-dependent methyl migration to produce 3-hydroxy-3-methyl-2-ketobutyrate (HMKB). In the reductase reaction, this 2-ketoacid undergoes a metal-dependent reduction by NADPH to yield (R)-2,3-dihydroxy-isovalerate. This Thermoanaerobacter sp. (strain X514) protein is Ketol-acid reductoisomerase (NADP(+)).